The sequence spans 332 residues: Geranylgeranyl pyrophosphate synthase 2 (332 aa).

3 residues coordinate isopentenyl diphosphate: Lys-55, Arg-58, and His-87. The Mg(2+) site is built by Asp-94 and Asp-98. Arg-103 is a dimethylallyl diphosphate binding site. Arg-104 serves as a coordination point for isopentenyl diphosphate. Dimethylallyl diphosphate is bound by residues Lys-181, Thr-182, and Gln-218. Asp-221 is a Mg(2+) binding site. Dimethylallyl diphosphate contacts are provided by Asn-225, Lys-235, and Lys-245.

The protein belongs to the FPP/GGPP synthase family. It depends on Mg(2+) as a cofactor.

It carries out the reaction isopentenyl diphosphate + dimethylallyl diphosphate = (2E)-geranyl diphosphate + diphosphate. The enzyme catalyses isopentenyl diphosphate + (2E)-geranyl diphosphate = (2E,6E)-farnesyl diphosphate + diphosphate. It catalyses the reaction isopentenyl diphosphate + (2E,6E)-farnesyl diphosphate = (2E,6E,10E)-geranylgeranyl diphosphate + diphosphate. In terms of biological role, geranylgeranyl pyrophosphate synthase; part of the gene cluster 3 that mediates the biosynthesis of an isoprenoid secondary metabolite. This Zymoseptoria tritici (strain CBS 115943 / IPO323) (Speckled leaf blotch fungus) protein is Geranylgeranyl pyrophosphate synthase 2 (GGS2).